Here is a 556-residue protein sequence, read N- to C-terminus: Genetic interactor of prohibitins 3, mitochondrial (556 aa).

Residues M1–K21 constitute a mitochondrion transit peptide. A CP-type G domain is found at E113–S305.

This sequence belongs to the TRAFAC class YlqF/YawG GTPase family. GEP3 subfamily.

The protein resides in the mitochondrion. Interacts genetically with prohibitins and thus may be involved in the mitochondrial lipid metabolism. The polypeptide is Genetic interactor of prohibitins 3, mitochondrial (GEP3) (Saccharomyces cerevisiae (strain YJM789) (Baker's yeast)).